The following is a 270-amino-acid chain: Aliphatic sulfonates import ATP-binding protein SsuB 3 (270 aa).

The 222-residue stretch at 17-238 folds into the ABC transporter domain; that stretch reads LAVQNLKKAF…ARGSHRLAAL (222 aa). 49 to 56 contributes to the ATP binding site; that stretch reads GRSGCGKS.

The protein belongs to the ABC transporter superfamily. Aliphatic sulfonates importer (TC 3.A.1.17.2) family. In terms of assembly, the complex is composed of two ATP-binding proteins (SsuB), two transmembrane proteins (SsuC) and a solute-binding protein (SsuA).

The protein resides in the cell inner membrane. It carries out the reaction ATP + H2O + aliphatic sulfonate-[sulfonate-binding protein]Side 1 = ADP + phosphate + aliphatic sulfonateSide 2 + [sulfonate-binding protein]Side 1.. In terms of biological role, part of the ABC transporter complex SsuABC involved in aliphatic sulfonates import. Responsible for energy coupling to the transport system. In Pseudomonas syringae pv. tomato (strain ATCC BAA-871 / DC3000), this protein is Aliphatic sulfonates import ATP-binding protein SsuB 3.